Reading from the N-terminus, the 357-residue chain is S-adenosyl-L-methionine:benzoic acid/salicylic acid carboxyl methyltransferase 3 (357 aa).

Position 18 (Tyr18) interacts with S-adenosyl-L-homocysteine. Gln25 contributes to the benzoate binding site. Residues Cys59, Asn64, Asp96, Leu97, Ser135, and Phe136 each contribute to the S-adenosyl-L-homocysteine site. Trp157 contributes to the benzoate binding site. Residues Asn168, Asp254, Phe256, and Asn257 each contribute to the Mg(2+) site. Gln260 lines the benzoate pocket.

This sequence belongs to the methyltransferase superfamily. Type-7 methyltransferase family.

The catalysed reaction is benzoate + S-adenosyl-L-methionine = methyl benzoate + S-adenosyl-L-homocysteine. It participates in aromatic compound metabolism. Its function is as follows. Converts benzoic acid into the volatile ester methyl benzoates. This scent, mostly produced in a rhythmical, diurnal manner, attracts the pollinators. This is S-adenosyl-L-methionine:benzoic acid/salicylic acid carboxyl methyltransferase 3 from Petunia hybrida (Petunia).